Reading from the N-terminus, the 626-residue chain is MTKLVRSRLDLTWVFTTMKRLRLPVLAVLFLAISPVQGGEIQIPVIKDGEAQVIKELEDSDYWIRHDLWVETEFDLDGDGKLDRMHVSVTRPTQTDTQSLKLPVIYNSSPYFAGTTGGDESYFWDARQELGDEPPKRSAAPAIEREGTRPIISKRHVKDWLPRGFVVVHSSAPGTGLSQGCPTVGDDPEALAPKAVIDWLCGRAKGFTEPFGGEPVEAYWSSGKVGMTGTSYNGTIPLAAATTGVEGLEVIIPVAPNTSYYHYYRSNGLVRHPGGYLGEDIDILYDFIHSGGDEETRAYCDCHIRDEQMMANQDRATGDYNDFWYSRDYLNRVDGVKAAVLMAHAFNDWNVVPEHSIRIYEALKKNGVETQLFMHQGGHGGPPPISMMNRWFTHYLYGEDNGVEKGSKSWIVREKDERTKPTEYPQYPHPEAKDVVVYPVPGAPQRGRLQTAPLTEPITETLVDNFSFAGETLAQAEYTEHRLIYTTPELSEAVHLSGTPRIKLRLACDRPAANLSVWLVSLPWNTQKNSKITDNIITRGWADPQNIESMRESKPLVPGQFYDIEFDLQPDDQVIAKGQQIGLMVFSSDRDYTLHPTPGTKLTIDLQHTQLSLPVVGGTIPLESQD.

Active-site charge relay system residues include serine 231, aspartate 348, and histidine 379.

This sequence belongs to the peptidase S15 family.

It catalyses the reaction Hydrolyzes Xaa-Pro-|- bonds to release unblocked, N-terminal dipeptides from substrates including Ala-Pro-|-p-nitroanilide and (sequentially) Tyr-Pro-|-Phe-Pro-|-Gly-Pro-|-Ile.. The chain is Putative Xaa-Pro dipeptidyl-peptidase from Rhodopirellula baltica (strain DSM 10527 / NCIMB 13988 / SH1).